Here is a 419-residue protein sequence, read N- to C-terminus: Cell division protein FtsZ (419 aa).

GTP-binding positions include 22–26 (GGGGN), 109–111 (GSG), E140, R144, and D188. The disordered stretch occupies residues 397–419 (ERFEAPISQDEDELDTPPFFKNR).

The protein belongs to the FtsZ family. As to quaternary structure, homodimer. Polymerizes to form a dynamic ring structure in a strictly GTP-dependent manner. Interacts directly with several other division proteins. Interacts with CcrZ; the interaction is direct.

It is found in the cytoplasm. Essential cell division protein that forms a contractile ring structure (Z ring) at the future cell division site. The regulation of the ring assembly controls the timing and the location of cell division. One of the functions of the FtsZ ring is to recruit other cell division proteins to the septum to produce a new cell wall between the dividing cells. Binds GTP and shows GTPase activity. The protein is Cell division protein FtsZ of Streptococcus pneumoniae serotype 2 (strain D39 / NCTC 7466).